Here is a 221-residue protein sequence, read N- to C-terminus: Putative transmembrane protein ORF25 (221 aa).

The signal sequence occupies residues 1–23; sequence MTLAAKLIVLVYVALCFVNESTS. N-linked (GlcNAc...) asparagine; by host glycosylation is found at Asn-19 and Asn-179. The Extracellular segment spans residues 24–191; sequence QDHSNIYHET…LAKARGVPMS (168 aa). A helical membrane pass occupies residues 192–212; that stretch reads VSVISGICAIILVIFPIFITI. Residues 213–221 are Cytoplasmic-facing; it reads ANLRRVYLH.

Its subcellular location is the host membrane. The polypeptide is Putative transmembrane protein ORF25 (Ostreid herpesvirus 1 (isolate France) (OsHV-1)).